A 416-amino-acid polypeptide reads, in one-letter code: Peroxisomal isocitrate dehydrogenase [NADP] (416 aa).

Residues threonine 77–threonine 79 and arginine 84 each bind NADP(+). Threonine 79 contacts substrate. Substrate-binding positions include serine 96–arginine 102, arginine 111, and arginine 134. Residue aspartate 253 participates in Mn(2+) binding. Lysine 261 is an NADP(+) binding site. Aspartate 276 lines the Mn(2+) pocket. NADP(+) contacts are provided by residues glycine 311–histidine 316 and asparagine 329. The Peroxisomal targeting signal signature appears at serine 414–leucine 416.

Belongs to the isocitrate and isopropylmalate dehydrogenases family. Requires Mg(2+) as cofactor. Mn(2+) serves as cofactor.

Its subcellular location is the peroxisome. The catalysed reaction is D-threo-isocitrate + NADP(+) = 2-oxoglutarate + CO2 + NADPH. Its function is as follows. May be involved in response to oxidative stresses. This is Peroxisomal isocitrate dehydrogenase [NADP] (ICDH) from Arabidopsis thaliana (Mouse-ear cress).